The primary structure comprises 384 residues: BTB and MATH domain-containing protein 34 (384 aa).

The stretch at 41–127 forms a coiled coil; sequence LNGNTTLKRI…ELKFQKEQLK (87 aa). Positions 167-277 constitute an MATH domain; sequence EFSHTFNSVA…VFNFGEYEEI (111 aa). The region spanning 317–380 is the BTB domain; it reads SDAVMIVKDE…LYGEPALTGR (64 aa).

The chain is BTB and MATH domain-containing protein 34 (bath-34) from Caenorhabditis elegans.